Reading from the N-terminus, the 276-residue chain is Large ribosomal subunit protein uL2 (276 aa).

Residues Val224–Lys254 form a disordered region.

This sequence belongs to the universal ribosomal protein uL2 family. In terms of assembly, part of the 50S ribosomal subunit. Forms a bridge to the 30S subunit in the 70S ribosome.

Functionally, one of the primary rRNA binding proteins. Required for association of the 30S and 50S subunits to form the 70S ribosome, for tRNA binding and peptide bond formation. It has been suggested to have peptidyltransferase activity; this is somewhat controversial. Makes several contacts with the 16S rRNA in the 70S ribosome. The chain is Large ribosomal subunit protein uL2 from Gluconobacter oxydans (strain 621H) (Gluconobacter suboxydans).